Reading from the N-terminus, the 451-residue chain is Tubulin alpha-1 chain (451 aa).

A GTP-binding site is contributed by glutamine 11. Position 40 is an N6-acetyllysine (lysine 40). GTP is bound by residues glutamate 71, glycine 144, threonine 145, threonine 179, asparagine 206, and asparagine 228. Glutamate 71 lines the Mg(2+) pocket. Glutamate 254 is an active-site residue.

Belongs to the tubulin family. As to quaternary structure, dimer of alpha and beta chains. A typical microtubule is a hollow water-filled tube with an outer diameter of 25 nm and an inner diameter of 15 nM. Alpha-beta heterodimers associate head-to-tail to form protofilaments running lengthwise along the microtubule wall with the beta-tubulin subunit facing the microtubule plus end conferring a structural polarity. Microtubules usually have 13 protofilaments but different protofilament numbers can be found in some organisms and specialized cells. Requires Mg(2+) as cofactor. In terms of processing, undergoes a tyrosination/detyrosination cycle, the cyclic removal and re-addition of a C-terminal tyrosine residue by the enzymes tubulin tyrosine carboxypeptidase (TTCP) and tubulin tyrosine ligase (TTL), respectively. Post-translationally, acetylation of alpha chains at Lys-40 stabilizes microtubules and affects affinity and processivity of microtubule motors. This modification has a role in multiple cellular functions, ranging from cell motility, cell cycle progression or cell differentiation to intracellular trafficking and signaling.

The protein localises to the cytoplasm. It is found in the cytoskeleton. It catalyses the reaction GTP + H2O = GDP + phosphate + H(+). Functionally, tubulin is the major constituent of microtubules, a cylinder consisting of laterally associated linear protofilaments composed of alpha- and beta-tubulin heterodimers. Microtubules grow by the addition of GTP-tubulin dimers to the microtubule end, where a stabilizing cap forms. Below the cap, tubulin dimers are in GDP-bound state, owing to GTPase activity of alpha-tubulin. In Chlamydomonas reinhardtii (Chlamydomonas smithii), this protein is Tubulin alpha-1 chain (TUBA1).